The sequence spans 359 residues: sn-1 acyl-lipid omega-3 desaturase (ferredoxin) (359 aa).

The span at 1–15 (MQLDTISFNNPLNSE) shows a compositional bias: polar residues. A disordered region spans residues 1 to 20 (MQLDTISFNNPLNSETSEDT). 2 helical membrane passes run 47-67 (LFYFFRDILIIGLLYAVASYL) and 70-90 (WLFFPIFWLMQGTMFWALFVV). The short motif at 92 to 96 (HDCGH) is the Histidine box-1 element. Residues 128-132 (HRTHH) carry the Histidine box-2 motif. Helical transmembrane passes span 207–227 (VLLIGMVGLLGFLTYQWGWMW) and 228–248 (LLKYYAVPYLVFIVWLDLVTF). The short motif at 294–298 (HHIFL) is the Histidine box-3 element.

This sequence belongs to the fatty acid desaturase type 2 family. The cofactor is Fe(2+).

It localises to the membrane. It catalyses the reaction a 1-[(9Z,12Z)-octadecdienoyl]-2-acyl-glycerolipid + 2 reduced [2Fe-2S]-[ferredoxin] + O2 + 2 H(+) = a 1-[(9Z,12Z,15Z)-octadectrienoyl]-2-acyl-glycerolipid + 2 oxidized [2Fe-2S]-[ferredoxin] + 2 H2O. It carries out the reaction a 1-[(6Z,9Z,12Z)-octadectrienoyl]-2-acyl-glycerolipid + 2 reduced [2Fe-2S]-[ferredoxin] + O2 + 2 H(+) = a 1-[(6Z,9Z,12Z,15Z)-octadectetraenoyl]-2-acyl-glycerolipid + 2 oxidized [2Fe-2S]-[ferredoxin] + 2 H2O. The protein operates within lipid metabolism; polyunsaturated fatty acid biosynthesis. Functionally, desaturase involved in fatty acid biosynthesis. Introduces a double bond at carbon 15 of linoleoyl and gamma-linolenoyl groups attached to the sn-1 position of the glycerol moiety of membrane glycerolipids. This is sn-1 acyl-lipid omega-3 desaturase (ferredoxin) from Nostoc sp. (strain 36).